A 330-amino-acid polypeptide reads, in one-letter code: (4-{4-[2-(gamma-L-glutamylamino)ethyl]phenoxymethyl}furan-2-yl)methanamine synthase (330 aa).

This sequence belongs to the MfnF family.

It catalyses the reaction gamma-L-glutamyltyramine + [5-(aminomethyl)furan-3-yl]methyl diphosphate = (4-{4-[2-(gamma-L-glutamylamino)ethyl]phenoxymethyl}furan-2-yl)methanamine + diphosphate. Its pathway is cofactor biosynthesis; methanofuran biosynthesis. Catalyzes the condensation between 5-(aminomethyl)-3-furanmethanol diphosphate (F1-PP) and gamma-glutamyltyramine to produce APMF-Glu. The protein is (4-{4-[2-(gamma-L-glutamylamino)ethyl]phenoxymethyl}furan-2-yl)methanamine synthase of Methanocaldococcus jannaschii (strain ATCC 43067 / DSM 2661 / JAL-1 / JCM 10045 / NBRC 100440) (Methanococcus jannaschii).